A 134-amino-acid chain; its full sequence is Phosphoribosyl-AMP cyclohydrolase (134 aa).

Mg(2+) is bound at residue D80. C81 is a binding site for Zn(2+). D82 and D84 together coordinate Mg(2+). Zn(2+) contacts are provided by C98 and C105.

It belongs to the PRA-CH family. In terms of assembly, homodimer. Mg(2+) is required as a cofactor. Zn(2+) serves as cofactor.

The protein resides in the cytoplasm. The catalysed reaction is 1-(5-phospho-beta-D-ribosyl)-5'-AMP + H2O = 1-(5-phospho-beta-D-ribosyl)-5-[(5-phospho-beta-D-ribosylamino)methylideneamino]imidazole-4-carboxamide. It functions in the pathway amino-acid biosynthesis; L-histidine biosynthesis; L-histidine from 5-phospho-alpha-D-ribose 1-diphosphate: step 3/9. Catalyzes the hydrolysis of the adenine ring of phosphoribosyl-AMP. In Herminiimonas arsenicoxydans, this protein is Phosphoribosyl-AMP cyclohydrolase.